A 476-amino-acid polypeptide reads, in one-letter code: Cytosolic iron-sulfur assembly component 3 (476 aa).

A2 is modified (N-acetylalanine). 8 residues coordinate [4Fe-4S] cluster: C24, C71, C74, C77, C190, C246, C395, and C399.

It belongs to the NARF family. External component of the CIA complex. In the CIA complex, interacts directly with CIAO1 and MMS19.

Component of the cytosolic iron-sulfur protein assembly (CIA) complex, a multiprotein complex that mediates the incorporation of iron-sulfur cluster into extramitochondrial Fe/S proteins. Seems to negatively regulate the level of HIF1A expression, although this effect could be indirect. The sequence is that of Cytosolic iron-sulfur assembly component 3 from Rattus norvegicus (Rat).